The chain runs to 554 residues: Arginine--tRNA ligase (554 aa).

A 'HIGH' region motif is present at residues 132–142 (ANPTGPIHLGG).

This sequence belongs to the class-I aminoacyl-tRNA synthetase family. In terms of assembly, monomer.

The protein localises to the cytoplasm. It carries out the reaction tRNA(Arg) + L-arginine + ATP = L-arginyl-tRNA(Arg) + AMP + diphosphate. In Clavibacter sepedonicus (Clavibacter michiganensis subsp. sepedonicus), this protein is Arginine--tRNA ligase.